Reading from the N-terminus, the 512-residue chain is Perphorin-1 (512 aa).

The signal sequence occupies residues 1–18 (MMRKALLALCVATAFAVA). N-linked (GlcNAc...) asparagine glycans are attached at residues Asn-49, Asn-96, Asn-118, Asn-378, Asn-381, Asn-403, and Asn-476.

The protein resides in the secreted. It localises to the extracellular space. Its subcellular location is the extracellular matrix. Its function is as follows. May be involved in conversion of asexual males and females to the sexual pathway. The polypeptide is Perphorin-1 (Volvox carteri (Green alga)).